The sequence spans 276 residues: Bis(5'-nucleosyl)-tetraphosphatase, symmetrical (276 aa).

It belongs to the Ap4A hydrolase family.

The catalysed reaction is P(1),P(4)-bis(5'-adenosyl) tetraphosphate + H2O = 2 ADP + 2 H(+). In terms of biological role, hydrolyzes diadenosine 5',5'''-P1,P4-tetraphosphate to yield ADP. The sequence is that of Bis(5'-nucleosyl)-tetraphosphatase, symmetrical from Legionella pneumophila (strain Lens).